We begin with the raw amino-acid sequence, 223 residues long: Ribose-5-phosphate isomerase A (223 aa).

Substrate contacts are provided by residues 26-29 (TGST), 82-85 (DGAD), and 95-98 (KGGG). Glu-104 (proton acceptor) is an active-site residue. Residue Lys-122 participates in substrate binding.

The protein belongs to the ribose 5-phosphate isomerase family. In terms of assembly, homodimer.

It carries out the reaction aldehydo-D-ribose 5-phosphate = D-ribulose 5-phosphate. Its pathway is carbohydrate degradation; pentose phosphate pathway; D-ribose 5-phosphate from D-ribulose 5-phosphate (non-oxidative stage): step 1/1. Catalyzes the reversible conversion of ribose-5-phosphate to ribulose 5-phosphate. This Streptococcus agalactiae serotype V (strain ATCC BAA-611 / 2603 V/R) protein is Ribose-5-phosphate isomerase A.